A 368-amino-acid polypeptide reads, in one-letter code: Quinolinate synthase (368 aa).

Iminosuccinate contacts are provided by His-46 and Ser-63. Cys-110 is a [4Fe-4S] cluster binding site. Iminosuccinate-binding positions include 141–143 and Ser-162; that span reads YVN. Cys-230 lines the [4Fe-4S] cluster pocket. Iminosuccinate contacts are provided by residues 256 to 258 and Thr-273; that span reads HPE. A [4Fe-4S] cluster-binding site is contributed by Cys-320.

The protein belongs to the quinolinate synthase family. Type 3 subfamily. It depends on [4Fe-4S] cluster as a cofactor.

The protein resides in the cytoplasm. It catalyses the reaction iminosuccinate + dihydroxyacetone phosphate = quinolinate + phosphate + 2 H2O + H(+). It participates in cofactor biosynthesis; NAD(+) biosynthesis; quinolinate from iminoaspartate: step 1/1. Catalyzes the condensation of iminoaspartate with dihydroxyacetone phosphate to form quinolinate. The protein is Quinolinate synthase of Bacillus anthracis (strain A0248).